We begin with the raw amino-acid sequence, 470 residues long: Desmin (470 aa).

Residues 2–108 (SQAYSSSQRV…QEFLTTRTNE (107 aa)) form a head region. Serine 7 is modified (phosphoserine; by CDK1). Serine 12 is subject to Phosphoserine; by AURKB. Arginine 16 carries the omega-N-methylarginine modification. Threonine 17 is modified (phosphothreonine; by AURKB and ROCK1). Serine 28 bears the Phosphoserine; by CDK1 mark. Phosphoserine is present on serine 31. Residue serine 32 is modified to Phosphoserine; by CDK1. Residue arginine 37 is modified to Asymmetric dimethylarginine; alternate. Arginine 37 is subject to Omega-N-methylarginine; alternate. Serine 45 is modified (phosphoserine). Residue arginine 58 is modified to ADP-ribosylarginine. Phosphoserine; by AURKB is present on serine 60. Serine 68 is modified (phosphoserine). Omega-N-methylarginine is present on arginine 70. Phosphothreonine; by ROCK1 is present on residues threonine 76 and threonine 77. The residue at position 81 (serine 81) is a Phosphoserine. One can recognise an IF rod domain in the interval 108 to 416 (EKVELQELND…KLLEGEESRI (309 aa)). Residues 109–141 (KVELQELNDRFANYIEKVRFLEQQNAALAAEVN) form a coil 1A region. The tract at residues 142-151 (RLKGREPTRV) is linker 1. The coil 1B stretch occupies residues 152–252 (AELYEEELRE…HEEEIRELQA (101 aa)). The interval 253–268 (QLQEQQVQVEMDMSKP) is linker 12. The segment at 268-415 (PDLTAALRDI…RKLLEGEESR (148 aa)) is interaction with NEB. Residues 269–287 (DLTAALRDIRAQYETIAAK) are coil 2A. The interval 288–295 (NISEAEEW) is linker 2. Serine 290, serine 358, serine 361, and serine 424 each carry phosphoserine. The tract at residues 296–412 (YKSKVSDLTQ…ATYRKLLEGE (117 aa)) is coil 2B. Residues 413-470 (ESRINLPIQTYSALNFRETSPEQRGSEVHTKKTVMIKTIETRDGEVVSEATQQQHEVL) form a tail region. The interval 438-453 (SEVHTKKTVMIKTIET) is interaction with CRYAB.

The protein belongs to the intermediate filament family. As to quaternary structure, homomer. Interacts with DST. Interacts with MTM1. Interacts with EPPK1; interaction is dependent of higher-order structure of intermediate filament. Interacts with CRYAB. Interacts with NEB (via nebulin repeats 160-164). Interacts (via rod region) with NEBL (via nebulin repeats 1-5). Interacts with ASB2 isoform 1; the interaction targets DES for proteasomal degradation. Interacts with PLEC isoform 1C. Interacts with PKP1. Interacts with FLII. Post-translationally, ADP-ribosylation prevents ability to form intermediate filaments. In terms of processing, phosphorylation at Ser-7, Ser-28 and Ser-32 by CDK1, phosphorylation at Ser-60 by AURKB and phosphorylation at Thr-76 by ROCK1 contribute to efficient separation of desmin intermediate filaments during mitosis. Ubiquitination by a SCF-like complex containing ASB2 isoform 1 leads to proteasomal degradation.

It is found in the cytoplasm. It localises to the myofibril. Its subcellular location is the sarcomere. The protein resides in the z line. The protein localises to the cell membrane. It is found in the sarcolemma. It localises to the nucleus. Its subcellular location is the cell tip. The protein resides in the nucleus envelope. In terms of biological role, muscle-specific type III intermediate filament essential for proper muscular structure and function. Plays a crucial role in maintaining the structure of sarcomeres, inter-connecting the Z-disks and forming the myofibrils, linking them not only to the sarcolemmal cytoskeleton, but also to the nucleus and mitochondria, thus providing strength for the muscle fiber during activity. In adult striated muscle they form a fibrous network connecting myofibrils to each other and to the plasma membrane from the periphery of the Z-line structures. May act as a sarcomeric microtubule-anchoring protein: specifically associates with detyrosinated tubulin-alpha chains, leading to buckled microtubules and mechanical resistance to contraction. Required for nuclear membrane integrity, via anchoring at the cell tip and nuclear envelope, resulting in maintenance of microtubule-derived intracellular mechanical forces. Contributes to the transcriptional regulation of the NKX2-5 gene in cardiac progenitor cells during a short period of cardiomyogenesis and in cardiac side population stem cells in the adult. Plays a role in maintaining an optimal conformation of nebulette (NEB) on heart muscle sarcomeres to bind and recruit cardiac alpha-actin. The chain is Desmin (DES) from Homo sapiens (Human).